The chain runs to 324 residues: Ribose 1,5-bisphosphate isomerase (324 aa).

Substrate is bound by residues 22-25 (RGAG) and Arg65. Catalysis depends on Cys135, which acts as the Proton acceptor. Substrate is bound at residue 137 to 139 (SKA). The Proton donor role is filled by Asp204. Residues 214–215 (NK) and Lys240 contribute to the substrate site.

The protein belongs to the eIF-2B alpha/beta/delta subunits family. R15P isomerase subfamily.

The enzyme catalyses alpha-D-ribose 1,5-bisphosphate = D-ribulose 1,5-bisphosphate. In terms of biological role, catalyzes the isomerization of ribose 1,5-bisphosphate (R15P) to ribulose 1,5-bisphosphate (RuBP), the CO(2) acceptor and substrate for RubisCO. Functions in an archaeal AMP degradation pathway, together with AMP phosphorylase and RubisCO. The chain is Ribose 1,5-bisphosphate isomerase from Pyrococcus horikoshii (strain ATCC 700860 / DSM 12428 / JCM 9974 / NBRC 100139 / OT-3).